Consider the following 275-residue polypeptide: Hydroxyethylthiazole kinase (275 aa).

Methionine 50 provides a ligand contact to substrate. ATP is bound by residues arginine 126 and serine 171. A substrate-binding site is contributed by alanine 200.

This sequence belongs to the Thz kinase family. Mg(2+) is required as a cofactor.

The enzyme catalyses 5-(2-hydroxyethyl)-4-methylthiazole + ATP = 4-methyl-5-(2-phosphooxyethyl)-thiazole + ADP + H(+). It participates in cofactor biosynthesis; thiamine diphosphate biosynthesis; 4-methyl-5-(2-phosphoethyl)-thiazole from 5-(2-hydroxyethyl)-4-methylthiazole: step 1/1. Catalyzes the phosphorylation of the hydroxyl group of 4-methyl-5-beta-hydroxyethylthiazole (THZ). The polypeptide is Hydroxyethylthiazole kinase (Acinetobacter baumannii (strain ATCC 17978 / DSM 105126 / CIP 53.77 / LMG 1025 / NCDC KC755 / 5377)).